The primary structure comprises 279 residues: Thymidylate synthase 1 (279 aa).

A dUMP-binding site is contributed by 141 to 142 (RR). The active-site Nucleophile is the C161. DUMP is bound by residues 181 to 184 (RSND), N192, and 222 to 224 (HVY). D184 is a (6R)-5,10-methylene-5,6,7,8-tetrahydrofolate binding site. Residue A278 coordinates (6R)-5,10-methylene-5,6,7,8-tetrahydrofolate.

The protein belongs to the thymidylate synthase family. Bacterial-type ThyA subfamily. In terms of assembly, homodimer.

It is found in the cytoplasm. The enzyme catalyses dUMP + (6R)-5,10-methylene-5,6,7,8-tetrahydrofolate = 7,8-dihydrofolate + dTMP. It participates in pyrimidine metabolism; dTTP biosynthesis. Its function is as follows. Catalyzes the reductive methylation of 2'-deoxyuridine-5'-monophosphate (dUMP) to 2'-deoxythymidine-5'-monophosphate (dTMP) while utilizing 5,10-methylenetetrahydrofolate (mTHF) as the methyl donor and reductant in the reaction, yielding dihydrofolate (DHF) as a by-product. This enzymatic reaction provides an intracellular de novo source of dTMP, an essential precursor for DNA biosynthesis. This Bacillus spizizenii (strain ATCC 23059 / NRRL B-14472 / W23) (Bacillus subtilis subsp. spizizenii) protein is Thymidylate synthase 1.